Consider the following 227-residue polypeptide: Cytochrome c oxidase subunit 2 (227 aa).

At Met-1–Ser-14 the chain is on the mitochondrial intermembrane side. Residues Pro-15–Met-45 form a helical membrane-spanning segment. Topologically, residues Leu-46–Gln-59 are mitochondrial matrix. The helical transmembrane segment at Glu-60 to Met-87 threads the bilayer. Over Asp-88–Val-227 the chain is Mitochondrial intermembrane. Cu cation-binding residues include His-161, Cys-196, Glu-198, Cys-200, His-204, and Met-207. Mg(2+) is bound at residue Glu-198. Tyr-218 is subject to Phosphotyrosine.

Belongs to the cytochrome c oxidase subunit 2 family. In terms of assembly, component of the cytochrome c oxidase (complex IV, CIV), a multisubunit enzyme composed of 14 subunits. The complex is composed of a catalytic core of 3 subunits MT-CO1, MT-CO2 and MT-CO3, encoded in the mitochondrial DNA, and 11 supernumerary subunits COX4I, COX5A, COX5B, COX6A, COX6B, COX6C, COX7A, COX7B, COX7C, COX8 and NDUFA4, which are encoded in the nuclear genome. The complex exists as a monomer or a dimer and forms supercomplexes (SCs) in the inner mitochondrial membrane with NADH-ubiquinone oxidoreductase (complex I, CI) and ubiquinol-cytochrome c oxidoreductase (cytochrome b-c1 complex, complex III, CIII), resulting in different assemblies (supercomplex SCI(1)III(2)IV(1) and megacomplex MCI(2)III(2)IV(2)). Found in a complex with TMEM177, COA6, COX18, COX20, SCO1 and SCO2. Interacts with TMEM177 in a COX20-dependent manner. Interacts with COX20. Interacts with COX16. Cu cation is required as a cofactor.

It localises to the mitochondrion inner membrane. The catalysed reaction is 4 Fe(II)-[cytochrome c] + O2 + 8 H(+)(in) = 4 Fe(III)-[cytochrome c] + 2 H2O + 4 H(+)(out). Its function is as follows. Component of the cytochrome c oxidase, the last enzyme in the mitochondrial electron transport chain which drives oxidative phosphorylation. The respiratory chain contains 3 multisubunit complexes succinate dehydrogenase (complex II, CII), ubiquinol-cytochrome c oxidoreductase (cytochrome b-c1 complex, complex III, CIII) and cytochrome c oxidase (complex IV, CIV), that cooperate to transfer electrons derived from NADH and succinate to molecular oxygen, creating an electrochemical gradient over the inner membrane that drives transmembrane transport and the ATP synthase. Cytochrome c oxidase is the component of the respiratory chain that catalyzes the reduction of oxygen to water. Electrons originating from reduced cytochrome c in the intermembrane space (IMS) are transferred via the dinuclear copper A center (CU(A)) of subunit 2 and heme A of subunit 1 to the active site in subunit 1, a binuclear center (BNC) formed by heme A3 and copper B (CU(B)). The BNC reduces molecular oxygen to 2 water molecules using 4 electrons from cytochrome c in the IMS and 4 protons from the mitochondrial matrix. The protein is Cytochrome c oxidase subunit 2 (MT-CO2) of Canis mesomelas elongae (Eastern African black-backed jackal).